The chain runs to 224 residues: Deoxyribose-phosphate aldolase (224 aa).

Aspartate 92 (proton donor/acceptor) is an active-site residue. The Schiff-base intermediate with acetaldehyde role is filled by lysine 155. Catalysis depends on lysine 184, which acts as the Proton donor/acceptor.

The protein belongs to the DeoC/FbaB aldolase family. DeoC type 1 subfamily.

Its subcellular location is the cytoplasm. It catalyses the reaction 2-deoxy-D-ribose 5-phosphate = D-glyceraldehyde 3-phosphate + acetaldehyde. The protein operates within carbohydrate degradation; 2-deoxy-D-ribose 1-phosphate degradation; D-glyceraldehyde 3-phosphate and acetaldehyde from 2-deoxy-alpha-D-ribose 1-phosphate: step 2/2. Functionally, catalyzes a reversible aldol reaction between acetaldehyde and D-glyceraldehyde 3-phosphate to generate 2-deoxy-D-ribose 5-phosphate. This chain is Deoxyribose-phosphate aldolase, found in Clostridium perfringens (strain SM101 / Type A).